We begin with the raw amino-acid sequence, 83 residues long: Prolactin-releasing peptide (83 aa).

Residues methionine 1–serine 21 form the signal peptide. Residue phenylalanine 52 is modified to Phenylalanine amide. A propeptide spanning residues alanine 57 to glycine 83 is cleaved from the precursor.

Widely expressed, with highest levels in medulla oblongata and hypothalamus.

It is found in the secreted. Stimulates prolactin (PRL) release and regulates the expression of prolactin through its receptor GPR10. May stimulate lactotrophs directly to secrete PRL. This is Prolactin-releasing peptide (Prlh) from Rattus norvegicus (Rat).